Here is a 239-residue protein sequence, read N- to C-terminus: Ribonuclease 3 (239 aa).

Residues 12 to 137 (RARLETAIGY…LIAAIYLDGG (126 aa)) form the RNase III domain. Residue Glu-50 participates in Mg(2+) binding. The active site involves Asp-54. Asp-123 and Glu-126 together coordinate Mg(2+). The active site involves Glu-126. In terms of domain architecture, DRBM spans 162–231 (DAKTELQEWA…AMRLLEREGV (70 aa)).

Belongs to the ribonuclease III family. Homodimer. Mg(2+) serves as cofactor.

It localises to the cytoplasm. The enzyme catalyses Endonucleolytic cleavage to 5'-phosphomonoester.. Its function is as follows. Digests double-stranded RNA. Involved in the processing of primary rRNA transcript to yield the immediate precursors to the large and small rRNAs (23S and 16S). Processes some mRNAs, and tRNAs when they are encoded in the rRNA operon. Processes pre-crRNA and tracrRNA of type II CRISPR loci if present in the organism. In Sinorhizobium fredii (strain NBRC 101917 / NGR234), this protein is Ribonuclease 3.